A 364-amino-acid chain; its full sequence is Paraneoplastic antigen Ma2 homolog (364 aa).

An N-acetylalanine modification is found at Ala-2. The span at 335-351 (EEEEATFENENTEEPEG) shows a compositional bias: acidic residues. A disordered region spans residues 335 to 364 (EEEEATFENENTEEPEGGDGYGHWGNEAND).

The protein belongs to the PNMA family.

The protein resides in the nucleus. It is found in the nucleolus. In Bos taurus (Bovine), this protein is Paraneoplastic antigen Ma2 homolog (PNMA2).